The chain runs to 664 residues: ATP synthase subunit alpha 2 (664 aa).

180–187 (GDRATGKT) is a binding site for ATP. Positions 525–664 (MPAEDAAGDI…DAEAEARHKR (140 aa)) are disordered. Over residues 543–588 (ARGDADRDADHGANREVSREVSPEASREVSREVSCEVSHEADRDAA) the composition is skewed to basic and acidic residues. The span at 589 to 599 (ADAARVAGRAP) shows a compositional bias: low complexity. Residues 621–639 (ADGDRASASRPRPDARGDA) show a composition bias toward basic and acidic residues.

Belongs to the ATPase alpha/beta chains family. F-type ATPases have 2 components, CF(1) - the catalytic core - and CF(0) - the membrane proton channel. CF(1) has five subunits: alpha(3), beta(3), gamma(1), delta(1), epsilon(1). CF(0) has three main subunits: a(1), b(2) and c(9-12). The alpha and beta chains form an alternating ring which encloses part of the gamma chain. CF(1) is attached to CF(0) by a central stalk formed by the gamma and epsilon chains, while a peripheral stalk is formed by the delta and b chains.

The protein resides in the cell inner membrane. It catalyses the reaction ATP + H2O + 4 H(+)(in) = ADP + phosphate + 5 H(+)(out). Its function is as follows. Produces ATP from ADP in the presence of a proton gradient across the membrane. The alpha chain is a regulatory subunit. The chain is ATP synthase subunit alpha 2 from Burkholderia pseudomallei (strain 1710b).